The chain runs to 198 residues: GTP cyclohydrolase-2 (198 aa).

52 to 56 (RMHSE) serves as a coordination point for GTP. Residues Cys-57, Cys-68, and Cys-70 each contribute to the Zn(2+) site. GTP-binding positions include Gln-73, 94–96 (EGR), and Thr-116. The active-site Proton acceptor is the Asp-128. The active-site Nucleophile is the Arg-130. Residues Thr-151 and Lys-156 each contribute to the GTP site.

It belongs to the GTP cyclohydrolase II family. Requires Zn(2+) as cofactor.

It carries out the reaction GTP + 4 H2O = 2,5-diamino-6-hydroxy-4-(5-phosphoribosylamino)-pyrimidine + formate + 2 phosphate + 3 H(+). Its pathway is cofactor biosynthesis; riboflavin biosynthesis; 5-amino-6-(D-ribitylamino)uracil from GTP: step 1/4. In terms of biological role, catalyzes the conversion of GTP to 2,5-diamino-6-ribosylamino-4(3H)-pyrimidinone 5'-phosphate (DARP), formate and pyrophosphate. This chain is GTP cyclohydrolase-2, found in Vibrio parahaemolyticus serotype O3:K6 (strain RIMD 2210633).